The following is a 588-amino-acid chain: Aspartate--tRNA ligase (588 aa).

L-aspartate is bound at residue Glu172. An aspartate region spans residues Gln196–Lys199. Arg218 contributes to the L-aspartate binding site. ATP is bound by residues Arg218–Glu220 and Gln227. His449 serves as a coordination point for L-aspartate. Residue Glu483 participates in ATP binding. Arg490 provides a ligand contact to L-aspartate. Gly535 to Arg538 contributes to the ATP binding site.

The protein belongs to the class-II aminoacyl-tRNA synthetase family. Type 1 subfamily. Homodimer.

It is found in the cytoplasm. It carries out the reaction tRNA(Asp) + L-aspartate + ATP = L-aspartyl-tRNA(Asp) + AMP + diphosphate. Catalyzes the attachment of L-aspartate to tRNA(Asp) in a two-step reaction: L-aspartate is first activated by ATP to form Asp-AMP and then transferred to the acceptor end of tRNA(Asp). The chain is Aspartate--tRNA ligase from Haemophilus influenzae (strain 86-028NP).